The primary structure comprises 392 residues: Putative nickel insertion protein (392 aa).

Belongs to the LarC family.

In Methanothrix thermoacetophila (strain DSM 6194 / JCM 14653 / NBRC 101360 / PT) (Methanosaeta thermophila), this protein is Putative nickel insertion protein.